The following is a 173-amino-acid chain: MGKRYYCDYCDRSFQDNLHNRKKHLNGVQHHRAKKAWFDNFRDAATLLNDERSKEVCRKFVQTGQCVFGTSCRFSHMSEKQMKMLEQKIDDEKRQKEDPDQDGSSERSVDEWLSRREKKLAALTSGRVLRMEEEECTENIEIPPYLLSIPDLPPSLHPPPAGGWRVTVHNEWG.

The C3H1-type zinc-finger motif lies at 51–79 (ERSKEVCRKFVQTGQCVFGTSCRFSHMSE). The segment at 83-111 (KMLEQKIDDEKRQKEDPDQDGSSERSVDE) is disordered.

In terms of assembly, component of the U11/U12 snRNPs that are part of the U12-type spliceosome.

It is found in the nucleus. The polypeptide is Zinc finger matrin-type protein 5 (zmat5) (Danio rerio (Zebrafish)).